The sequence spans 683 residues: Acetyl-coenzyme A synthetase 2 (683 aa).

CoA-binding positions include Arg-206–Lys-209 and Thr-325. ATP-binding positions include Gly-401–Pro-403 and Asp-425–Thr-430. Asp-425 to Thr-430 contacts AMP. A Glycyl lysine isopeptide (Lys-Gly) (interchain with G-Cter in ubiquitin) cross-link involves residue Lys-506. ATP-binding residues include Asp-516 and Arg-531. The AMP site is built by Asp-516 and Arg-531. Ser-539 contributes to the CoA binding site. An ATP-binding site is contributed by Arg-542. Arg-612 lines the CoA pocket. Ser-679 carries the phosphoserine modification.

It belongs to the ATP-dependent AMP-binding enzyme family.

It localises to the cytoplasm. The protein localises to the nucleus. The catalysed reaction is acetate + ATP + CoA = acetyl-CoA + AMP + diphosphate. Its pathway is carbohydrate metabolism; pyruvate metabolism. Its function is as follows. Catalyzes the production of acetyl-CoA. Provides the acetyl-CoA source for histone acetylation in the nucleus. 'Anaerobic' isozyme of acetyl-coenzyme A synthetase, which is required for growth on fermentable carbon sources such as glucose. May be involved in the PDH (pyruvate dehydrogenase complex) bypass. This is Acetyl-coenzyme A synthetase 2 from Saccharomyces cerevisiae (strain ATCC 204508 / S288c) (Baker's yeast).